We begin with the raw amino-acid sequence, 366 residues long: Growth hormone secretagogue receptor type 1 (366 aa).

The Extracellular segment spans residues 1-40 (MWNATPSEEPGPNLTLPDLGWDAPPENDSLVEELLPLFPT). N-linked (GlcNAc...) asparagine glycans are attached at residues asparagine 13 and asparagine 27. The chain crosses the membrane as a helical span at residues 41–66 (PLLAGVTATCVALFVVGIAGNLLTML). Residues 67 to 72 (VVSRFR) are Cytoplasmic-facing. A helical transmembrane segment spans residues 73 to 96 (EMRTTTNLYLSSMAFSDLLIFLCM). Residues 97 to 117 (PLDLFRLWQYRPWNLGNLLCK) lie on the Extracellular side of the membrane. A disulfide bridge connects residues cysteine 116 and cysteine 198. A helical membrane pass occupies residues 118-139 (LFQFVSESCTYATVLTITALSV). Topologically, residues 140-162 (ERYFAICFPLRAKVVVTKGRVKL) are cytoplasmic. The helical transmembrane segment at 163 to 183 (VILVIWAVAFCSAGPIFVLVG) threads the bilayer. Topologically, residues 184–211 (VEHDNGTDPRDTNECRATEFAVRSGLLT) are extracellular. The helical transmembrane segment at 212-235 (VMVWVSSVFFFLPVFCLTVLYSLI) threads the bilayer. The Cytoplasmic portion of the chain corresponds to 236–263 (GRKLWRRKRGEAAVGSSLRDQNHKQTVK). A helical transmembrane segment spans residues 264-285 (MLAVVVFAFILCWLPFHVGRYL). Residues 286–302 (FSKSLEPGSVEIAQISQ) are Extracellular-facing. A helical membrane pass occupies residues 303-326 (YCNLVSFVLFYLSAAINPILYNIM). The Cytoplasmic segment spans residues 327-366 (SKKYRVAVFKLLGFEPFSQRKLSTLKDESSRAWTESSINT).

It belongs to the G-protein coupled receptor 1 family. Pituitary and hypothalamus.

The protein localises to the cell membrane. Receptor for ghrelin, coupled to G-alpha-11 proteins. Stimulates growth hormone secretion. Also binds other growth hormone releasing peptides (GHRP) (e.g. Met-enkephalin and GHRP-6) as well as non-peptide, low molecular weight secretagogues (e.g. L-692,429, MK-0677, adenosine). This chain is Growth hormone secretagogue receptor type 1 (GHSR), found in Sus scrofa (Pig).